We begin with the raw amino-acid sequence, 275 residues long: NH(3)-dependent NAD(+) synthetase (275 aa).

50–57 (GISGGVDS) contacts ATP. Asp56 contacts Mg(2+). Arg147 serves as a coordination point for deamido-NAD(+). Thr167 provides a ligand contact to ATP. Glu172 lines the Mg(2+) pocket. Positions 180 and 187 each coordinate deamido-NAD(+). ATP-binding residues include Lys196 and Thr218. Residue 267 to 268 (HK) coordinates deamido-NAD(+).

Belongs to the NAD synthetase family. As to quaternary structure, homodimer.

The catalysed reaction is deamido-NAD(+) + NH4(+) + ATP = AMP + diphosphate + NAD(+) + H(+). It functions in the pathway cofactor biosynthesis; NAD(+) biosynthesis; NAD(+) from deamido-NAD(+) (ammonia route): step 1/1. Its function is as follows. Catalyzes the ATP-dependent amidation of deamido-NAD to form NAD. Uses ammonia as a nitrogen source. The polypeptide is NH(3)-dependent NAD(+) synthetase (Pseudomonas entomophila (strain L48)).